We begin with the raw amino-acid sequence, 1796 residues long: MATSLAAQLAQIAAKSRSSLNVKAQKAAHTKSLIFEPRIAAGQSYQTIYTACRDGFEELCQLDARFTPFSNTLFSEQSQDEDRSQMTQAENKELDRRVDSFLRLVGSRLRLMPAIKAIEWLIRRFRIHEFNTSTLLATFLPYHSIPAFVTLLSILPADLPQQYKFLAPYVRSLTAPPRAAIVYQATHHREFLTAITEYTLDACRNKQQYPALVSFWAGVMTEAVNGRIDINRSGRQGVQLDNDLALIALVSKPLGDAMTMKDVPDIQIAAYMVVSLLAAKANFDDKLLSVFMEQLVIGWTAETVRPGLVCLSILAQYRAPKQLSSRVAKALLKMDDLPQRLVDASKQCRVDKLAYALVLALADRLAKKGDARGLPIIKSILLLELLQEKLGKVAFKSLLRAALKMTDEVDQDGSARKQLGSTLVLLSQSAGATGVMVRQVIEDEDYDIEGLELRLDTSFGPRRLLEDKPAEEDAKDLEVRQDPKETLEAAIERLAVPPRSVKSFLSQKSDQLFDDMCKVLLSVATDPDDLLKFDEAPFLCRQTAHDDSYYFSFYMRVWCGPYPTLIRSAALEMAKRRLKQGDCAALDLQAMIPYCVAALSDPAKKVRQAAADLITVLSKSNAEGIETAKRPIWASKQLYEQSNEQTWMNPAASRALLQEIIVPALEESVLDEEHISNVLRSHLQSTKDSATGPQLSSAVRLSIFSCITSHVVHTPLLAVKSRLLKPTNQVDSVSKATRTSLLLPLLRWWASLSSTEAAQLCERERIDESKFNQSCVNVAVANDKPGLETLFEIITNSSAWTREGLVEAAFARTRKIWSTIKSDSKLKLALSMLDLAQTPATAGSSAEFVSEEAADFLRNVDLTTNILNAFLESLQDIPKITTDSPATKRRRTSSSDHSRGVSLQATNAVKAALNKVTFVLQLVEGSKPAEHPELLQSLFVTLADLQVLRSQVGSELGYLQNLVLSSLLAMMPTYKNNKSLKIDTSVGHGDVLVQCIQKSSSPAVQNSALLLVASLANTAPDVVLHSVMPIFTFMGGSVLRQSDDYSAHVVVQTIKEVIPPLVETFRKSRRNLVTSAAELLSSFVIAYEHIPSHRKRDMFISLIENLGPKDFLAALVAMFVDKYGTTDSMVAFCKDLMNSFGVEVQLQSLVMLLDLVSDCLQPKPTLAATLFNRNTDDDQDLHKTALKELTLLPKVLSSRQLRTEVSQLAGRDDMEASKFRELYASLLEKILTLAETVKTNKALHARCSDTLAGLLNLLSIGEFIKAVENLLDRPSISLRQKVLRTLEVRVDQESNTDADSRTVLLAFLPQLTAVIRDSDDIAYKHTAVACVDKIAEKYGKKDLEAVAAAATTIAGDCCLGQPDKRLRVMALLCLASLVDVLQDGIVPTLPVSLPKALSYLSESLQGEKEPELHNAVYSFFESLAVHVPYMLTKTYIGQLLAVSNVSAEANMSDESSQARFGCLQLLANQVDANTMLAALEQNWAQAVNAGFSAVEEYLKLLATVLDKHPSTIIAKHISTLSTIFLSALDLRRNVQSKDTVSIAALAKLTEIEALINDVALKMIYKLNDSKFRTVFTQLMEWVATGLPKDDKLGKVLRHQSVYSFLLAFFDNLKDVVASYASYIIDDATAILKASDPSKMEDRELWQLVLKTLARCFEHDSGGFWQVPAHFEAVSGLLVEQLEHAAALGELPGGDLVQNAVVGLAEAAASRDHRKELNAAVLRRLRSPSASVRLAAVRCEQSLTDTLGEDWLEMLSEMLPYISELQDDDDEDVEKETHRWITKIEAILGESLDAMLQ.

HEAT repeat units lie at residues 586–623 (LDLQ…SNAE), 656–692 (LLQE…SATG), 861–898 (DLTT…SDHS), 983–1021 (DTSV…TAPD), 1052–1089 (QTIK…AYEH), 1161–1198 (QPKP…VLSS), 1258–1295 (LSIG…QESN), 1302–1340 (TVLL…KYGK), 1344–1383 (EAVA…VLQD), 1492–1529 (SAVE…SALD), 1711–1748 (DHRK…TLGE), and 1752–1789 (EMLS…ILGE). Residues 881–901 (TTDSPATKRRRTSSSDHSRGV) are disordered.

The protein belongs to the HEATR1/UTP10 family. In terms of assembly, component of the ribosomal small subunit (SSU) processome.

Its subcellular location is the nucleus. It is found in the nucleolus. Its function is as follows. Involved in nucleolar processing of pre-18S ribosomal RNA. Involved in ribosome biosynthesis. The chain is U3 small nucleolar RNA-associated protein 10 from Pyricularia oryzae (strain 70-15 / ATCC MYA-4617 / FGSC 8958) (Rice blast fungus).